We begin with the raw amino-acid sequence, 239 residues long: tRNA (guanine-N(7)-)-methyltransferase (239 aa).

Residues E69, E94, D121, and D144 each contribute to the S-adenosyl-L-methionine site. Residue D144 is part of the active site. K148 serves as a coordination point for substrate. The interaction with RNA stretch occupies residues 150–155 (RHNKRR). Substrate-binding positions include D180 and 217-220 (TKFE).

The protein belongs to the class I-like SAM-binding methyltransferase superfamily. TrmB family. Monomer.

The enzyme catalyses guanosine(46) in tRNA + S-adenosyl-L-methionine = N(7)-methylguanosine(46) in tRNA + S-adenosyl-L-homocysteine. It participates in tRNA modification; N(7)-methylguanine-tRNA biosynthesis. Functionally, catalyzes the formation of N(7)-methylguanine at position 46 (m7G46) in tRNA. In Yersinia pseudotuberculosis serotype I (strain IP32953), this protein is tRNA (guanine-N(7)-)-methyltransferase.